Reading from the N-terminus, the 534-residue chain is C-22 sterol desaturase ERG5B (534 aa).

A helical membrane pass occupies residues 43–61 (IAVTIFAVLIAYDQFMYIW). Residue Cys480 participates in heme binding.

This sequence belongs to the cytochrome P450 family. Heme serves as cofactor.

The protein resides in the endoplasmic reticulum membrane. It catalyses the reaction 5-dehydroepisterol + NADPH + O2 + H(+) = ergosta-5,7,22,24(28)-tetraen-3beta-ol + NADP(+) + 2 H2O. Its pathway is steroid metabolism; ergosterol biosynthesis. Its function is as follows. C-22 sterol desaturase; part of the third module of ergosterol biosynthesis pathway that includes the late steps of the pathway. ERG5A and ERG5B convert 5-dehydroepisterol into ergosta-5,7,22,24(28)-tetraen-3beta-ol by forming the C-22(23) double bond in the sterol side chain. The third module or late pathway involves the ergosterol synthesis itself through consecutive reactions that mainly occur in the endoplasmic reticulum (ER) membrane. Firstly, the squalene synthase ERG9 catalyzes the condensation of 2 farnesyl pyrophosphate moieties to form squalene, which is the precursor of all steroids. Squalene synthase is crucial for balancing the incorporation of farnesyl diphosphate (FPP) into sterol and nonsterol isoprene synthesis. Secondly, squalene is converted into lanosterol by the consecutive action of the squalene epoxidase ERG1 and the lanosterol synthase ERG7. Then, the delta(24)-sterol C-methyltransferase ERG6 methylates lanosterol at C-24 to produce eburicol. Eburicol is the substrate of the sterol 14-alpha demethylase encoded by CYP51A, CYP51B and CYP51C, to yield 4,4,24-trimethyl ergosta-8,14,24(28)-trienol. CYP51B encodes the enzyme primarily responsible for sterol 14-alpha-demethylation, and plays an essential role in ascospore formation. CYP51A encodes an additional sterol 14-alpha-demethylase, induced on ergosterol depletion and responsible for the intrinsic variation in azole sensitivity. The third CYP51 isoform, CYP51C, does not encode a sterol 14-alpha-demethylase, but is required for full virulence on host wheat ears. The C-14 reductase ERG24 then reduces the C14=C15 double bond which leads to 4,4-dimethylfecosterol. A sequence of further demethylations at C-4, involving the C-4 demethylation complex containing the C-4 methylsterol oxidases ERG25, the sterol-4-alpha-carboxylate 3-dehydrogenase ERG26 and the 3-keto-steroid reductase ERG27, leads to the production of fecosterol via 4-methylfecosterol. ERG28 has a role as a scaffold to help anchor ERG25, ERG26 and ERG27 to the endoplasmic reticulum. The C-8 sterol isomerase ERG2 then catalyzes the reaction which results in unsaturation at C-7 in the B ring of sterols and thus converts fecosterol to episterol. The sterol-C5-desaturases ERG3A and ERG3BB then catalyze the introduction of a C-5 double bond in the B ring to produce 5-dehydroepisterol. The C-22 sterol desaturases ERG5A and ERG5B further convert 5-dehydroepisterol into ergosta-5,7,22,24(28)-tetraen-3beta-ol by forming the C-22(23) double bond in the sterol side chain. Finally, ergosta-5,7,22,24(28)-tetraen-3beta-ol is substrate of the C-24(28) sterol reductase ERG4 to produce ergosterol. The sequence is that of C-22 sterol desaturase ERG5B from Gibberella zeae (strain ATCC MYA-4620 / CBS 123657 / FGSC 9075 / NRRL 31084 / PH-1) (Wheat head blight fungus).